Here is a 138-residue protein sequence, read N- to C-terminus: Cysteine desulfuration protein SufE (138 aa).

The active-site Cysteine persulfide intermediate is C51.

This sequence belongs to the SufE family. Homodimer. Interacts with SufS.

The protein resides in the cytoplasm. It participates in cofactor biosynthesis; iron-sulfur cluster biosynthesis. Functionally, participates in cysteine desulfuration mediated by SufS. Cysteine desulfuration mobilizes sulfur from L-cysteine to yield L-alanine and constitutes an essential step in sulfur metabolism for biosynthesis of a variety of sulfur-containing biomolecules. Functions as a sulfur acceptor for SufS, by mediating the direct transfer of the sulfur atom from the S-sulfanylcysteine of SufS, an intermediate product of cysteine desulfuration process. This is Cysteine desulfuration protein SufE from Escherichia fergusonii (strain ATCC 35469 / DSM 13698 / CCUG 18766 / IAM 14443 / JCM 21226 / LMG 7866 / NBRC 102419 / NCTC 12128 / CDC 0568-73).